The following is a 471-amino-acid chain: Glutamine synthetase (471 aa).

Residues 14-99 (QKIQMIDLKF…ICSIKEPRTG (86 aa)) form the GS beta-grasp domain. The GS catalytic domain occupies 106 to 471 (PRVIAQKAID…PYEFYLYYDC (366 aa)). Mg(2+)-binding residues include glutamate 131 and glutamate 133. Glutamate 208 is an ATP binding site. Residues glutamate 213 and glutamate 221 each coordinate Mg(2+). L-glutamate is bound by residues 265 to 266 (NG) and glycine 266. Mg(2+) is bound at residue histidine 270. Residues 272–274 (HQS) and serine 274 contribute to the ATP site. 3 residues coordinate L-glutamate: arginine 322, glutamate 328, and arginine 340. Positions 340, 345, and 354 each coordinate ATP. Glutamate 359 is a Mg(2+) binding site. Arginine 361 provides a ligand contact to L-glutamate. Tyrosine 399 carries the post-translational modification O-AMP-tyrosine.

The protein belongs to the glutamine synthetase family. Oligomer of 12 subunits arranged in the form of two hexagons. Mg(2+) serves as cofactor.

It localises to the cytoplasm. The catalysed reaction is L-glutamate + NH4(+) + ATP = L-glutamine + ADP + phosphate + H(+). Its activity is regulated as follows. The activity of this enzyme could be controlled by adenylation under conditions of abundant glutamine. Its function is as follows. Involved in nitrogen metabolism via ammonium assimilation. Catalyzes the ATP-dependent biosynthesis of glutamine from glutamate and ammonia. This Microchaete diplosiphon (Fremyella diplosiphon) protein is Glutamine synthetase.